Here is a 639-residue protein sequence, read N- to C-terminus: Centromere protein T (639 aa).

Disordered regions lie at residues 1–64, 266–294, 307–451, 458–477, and 494–534; these read MDGR…RPNA, QLSD…GLVS, SEKD…ERGT, AAEE…ESEE, and QPVL…TREP. Residues 12 to 23 show a composition bias toward low complexity; sequence RAAPTPRVAVRS. The interval 80 to 500 is flexible stalk domain; sequence IIQNQPQVSP…YRPQPVLSPP (421 aa). Positions 267-281 are enriched in polar residues; it reads LSDSKTSAQRSNTSY. 4 stretches are compositionally biased toward basic and acidic residues: residues 307–319, 329–338, 356–371, and 432–449; these read SEKD…EHVD, QGEEEQDHSQ, TEHH…SEKK, and PGAK…EIER. The segment covering 458–469 has biased composition (acidic residues); that stretch reads AAEEEATDDESD.

It belongs to the CENP-T/CNN1 family. In terms of assembly, component of the CENPA-CAD complex, composed of CENPI, CENPK, CENPL, CENPO, CENPP, CENPQ, CENPR and CENPS. The CENPA-CAD complex is probably recruited on centromeres by the CENPA-NAC complex, at least composed of CENPA, CENPC, CENPH, CENPM, CENPN, CENPT and CENPU. Identified in a centromeric complex containing histones H2A, H2B, H3 and H4, and at least CENPA, CENPB, CENPC, CENPT, CENPN, HJURP, SUPT16H, SSRP1 and RSF1. Interacts (via N-terminus) with the NDC80 complex. Heterodimer with CENPW; this dimer coassembles with CENPS-CENPX heterodimers at centromeres to form the tetrameric CENP-T-W-S-X complex.

It localises to the nucleus. The protein localises to the chromosome. The protein resides in the centromere. Its subcellular location is the kinetochore. Its function is as follows. Component of the CENPA-NAC (nucleosome-associated) complex, a complex that plays a central role in assembly of kinetochore proteins, mitotic progression and chromosome segregation. The CENPA-NAC complex recruits the CENPA-CAD (nucleosome distal) complex and may be involved in incorporation of newly synthesized CENPA into centromeres. Part of a nucleosome-associated complex that binds specifically to histone H3-containing nucleosomes at the centromere, as opposed to nucleosomes containing CENPA. Component of the heterotetrameric CENP-T-W-S-X complex that binds and supercoils DNA, and plays an important role in kinetochore assembly. CENPT has a fundamental role in kinetochore assembly and function. It is one of the inner kinetochore proteins, with most further proteins binding downstream. Required for normal chromosome organization and normal progress through mitosis. This is Centromere protein T (CENPT) from Gallus gallus (Chicken).